Reading from the N-terminus, the 166-residue chain is Protein BioX (166 aa).

5 helical membrane-spanning segments follow: residues 12-32 (ISLL…TGIP), 33-53 (GSEF…FGFK), 55-75 (YFLA…HSIL), 87-107 (VGLI…AGPI), and 117-137 (AFTL…GMVI).

Its subcellular location is the cell membrane. Does not seem to be a permease of pimelate. Its role in biotin synthesis is not clear. The chain is Protein BioX (bioX) from Lysinibacillus sphaericus (Bacillus sphaericus).